Here is a 182-residue protein sequence, read N- to C-terminus: Early upstream open reading frame (182 aa).

The protein belongs to the EUO family.

The protein is Early upstream open reading frame of Chlamydophila psittaci (strain ATCC VR-125 / 6BC) (Chlamydia psittaci).